Reading from the N-terminus, the 1091-residue chain is Sodium/potassium exporting P-type ATPase 1 (1091 aa).

Over 1 to 63 the chain is Cytoplasmic; that stretch reads MGEGTTKENN…LGDDTKIDYK (63 aa). The helical transmembrane segment at 64–84 threads the bilayer; it reads AMVLHQVCNAMIMVLLISMII. The Extracellular segment spans residues 85–90; that stretch reads SFAMHD. A helical membrane pass occupies residues 91–111; that stretch reads WITGGVISFVIAVNVLIGLVQ. The Cytoplasmic segment spans residues 112-282; the sequence is EYKATKTMNS…TNVGTPLHRK (171 aa). Residues 283–303 form a helical membrane-spanning segment; that stretch reads LSKLAVLLFWIAVLFAIIVMA. The Extracellular portion of the chain corresponds to 304 to 312; the sequence is SQKFDVDKR. A helical transmembrane segment spans residues 313–333; that stretch reads VAIYAICVALSMIPSSLVVVL. Residues 334–815 are Cytoplasmic-facing; the sequence is TITMSVGAAV…RRMTDNIQKF (482 aa). Asp-369 (4-aspartylphosphate intermediate) is an active-site residue. Residues Asp-369 and Thr-371 each coordinate Mg(2+). Thr-371 and Glu-483 together coordinate ATP. The segment at 499-525 is disordered; it reads ALTGEKSTNQSNENDQSSLSQHNEKPG. The span at 503–519 shows a compositional bias: polar residues; sequence EKSTNQSNENDQSSLSQ. ATP-binding residues include Lys-561, Arg-606, Thr-673, Gly-674, Asp-675, Arg-732, and Lys-738. Mg(2+) is bound at residue Asp-757. Asn-760 is an ATP binding site. Residues 816 to 836 form a helical membrane-spanning segment; sequence VLQLLAENVAQALYLIIGLVF. Residues 837-848 are Extracellular-facing; the sequence is RDENGKSVFPLS. Residues 849–869 form a helical membrane-spanning segment; sequence PVEVLWIIVVTSCFPAMGLGL. At 870–885 the chain is on the cytoplasmic side; it reads EKAAPDLMDRPPHDSE. A helical transmembrane segment spans residues 886–906; the sequence is VGIFTWEVIIDTFAYGIIMTG. Topologically, residues 907–943 are extracellular; it reads SCMASFTGSLYGINSGRLGHDCDGTYNSSCRDVYRSR. The helical transmembrane segment at 944 to 964 threads the bilayer; it reads SAAFATMTWCALILAWEVVDM. Topologically, residues 965–991 are cytoplasmic; sequence RRSFFRMHPDTDSPVKEFFRSIWGNQF. A helical transmembrane segment spans residues 992-1012; the sequence is LFWSIIFGFVSAFPVVYIPVI. Topologically, residues 1013–1021 are extracellular; it reads NDKVFLHKP. Residues 1022-1042 traverse the membrane as a helical segment; the sequence is IGAEWGLAIAFTIAFWIGAEL. The Cytoplasmic segment spans residues 1043–1091; sequence YKCGKRRYFKTQRAHNPENDLESNNKRDPFEAYSTSTTIHTEVNIGIKQ.

The protein belongs to the cation transport ATPase (P-type) (TC 3.A.3) family. Type IID subfamily. Mg(2+) serves as cofactor. The active site is phosphorylated in presence of sodium or potassium and in conditions of higher pH. Not phosphorylated in presence of calcium ions.

The protein resides in the cell membrane. The catalysed reaction is Na(+)(in) + ATP + H2O = Na(+)(out) + ADP + phosphate + H(+). It carries out the reaction K(+)(in) + ATP + H2O = K(+)(out) + ADP + phosphate + H(+). Functionally, catalyzes the hydrolysis of ATP coupled with the export of sodium and potassium from the cell. May export potassium less efficiently. May transport other cations such as lithium. Sodium/potassium efflux ATPases are involved in salt tolerance and maintaining the membrane potential across the plasma membrane in high salinity (Na+) or alkaline (K+) environments. Is negatively modulated by SIS2/HAL3. The sequence is that of Sodium/potassium exporting P-type ATPase 1 from Saccharomyces cerevisiae (strain ATCC 204508 / S288c) (Baker's yeast).